A 902-amino-acid polypeptide reads, in one-letter code: HTH-type transcriptional regulator MalT (902 aa).

39 to 46 provides a ligand contact to ATP; sequence SPAGYGKT. An HTH luxR-type domain is found at 832–897; it reads ELVRTSPLTQ…EAIVTAENLL (66 aa). The H-T-H motif DNA-binding region spans 856–875; sequence NEQIAQELDVAGTTIKTHIR.

The protein belongs to the MalT family. As to quaternary structure, monomer in solution. Oligomerizes to an active state in the presence of the positive effectors ATP and maltotriose.

Its activity is regulated as follows. Activated by ATP and maltotriose, which are both required for DNA binding. Its function is as follows. Positively regulates the transcription of the maltose regulon whose gene products are responsible for uptake and catabolism of malto-oligosaccharides. Specifically binds to the promoter region of its target genes, recognizing a short DNA motif called the MalT box. The protein is HTH-type transcriptional regulator MalT of Vibrio parahaemolyticus serotype O3:K6 (strain RIMD 2210633).